Reading from the N-terminus, the 264-residue chain is Flagellar brake protein YcgR 1 (264 aa).

Residues 132-249 form the PilZ domain; that stretch reads QRREFFRLES…RLAMIERYIA (118 aa).

The protein belongs to the YcgR family. In terms of assembly, monomer. Interacts with the flagellar basal bodies.

It is found in the bacterial flagellum basal body. Acts as a flagellar brake, regulating swimming and swarming in a bis-(3'-5') cyclic diguanylic acid (c-di-GMP)-dependent manner. Binds 1 c-di-GMP dimer per subunit. Increasing levels of c-di-GMP lead to decreased motility. In Dechloromonas aromatica (strain RCB), this protein is Flagellar brake protein YcgR 1.